A 123-amino-acid polypeptide reads, in one-letter code: Large ribosomal subunit protein bL19 (123 aa).

Belongs to the bacterial ribosomal protein bL19 family.

Functionally, this protein is located at the 30S-50S ribosomal subunit interface and may play a role in the structure and function of the aminoacyl-tRNA binding site. The polypeptide is Large ribosomal subunit protein bL19 (Thermomicrobium roseum (strain ATCC 27502 / DSM 5159 / P-2)).